A 253-amino-acid chain; its full sequence is Triosephosphate isomerase (253 aa).

Substrate is bound at residue 9–11 (NWK). H95 (electrophile) is an active-site residue. The active-site Proton acceptor is E167. Residues G173, S213, and 234–235 (GG) each bind substrate. S213 bears the Phosphoserine mark.

This sequence belongs to the triosephosphate isomerase family. Homodimer.

The protein localises to the cytoplasm. The catalysed reaction is D-glyceraldehyde 3-phosphate = dihydroxyacetone phosphate. Its pathway is carbohydrate biosynthesis; gluconeogenesis. It participates in carbohydrate degradation; glycolysis; D-glyceraldehyde 3-phosphate from glycerone phosphate: step 1/1. In terms of biological role, involved in the gluconeogenesis. Catalyzes stereospecifically the conversion of dihydroxyacetone phosphate (DHAP) to D-glyceraldehyde-3-phosphate (G3P). This Geobacillus kaustophilus (strain HTA426) protein is Triosephosphate isomerase.